The primary structure comprises 200 residues: A-type ATP synthase subunit E (200 aa).

It belongs to the V-ATPase E subunit family. As to quaternary structure, has multiple subunits with at least A(3), B(3), C, D, E, F, H, I and proteolipid K(x).

It is found in the cell membrane. In terms of biological role, component of the A-type ATP synthase that produces ATP from ADP in the presence of a proton gradient across the membrane. The protein is A-type ATP synthase subunit E of Methanopyrus kandleri (strain AV19 / DSM 6324 / JCM 9639 / NBRC 100938).